Here is a 263-residue protein sequence, read N- to C-terminus: Small ribosomal subunit protein uS2 (263 aa).

Ser-2 carries the N-acetylserine modification. The segment covering 211–242 (EQTAEEEAEAAEGAEFEVEEEEVEQEWQEPAE) has biased composition (acidic residues). Residues 211-263 (EQTAEEEAEAAEGAEFEVEEEEVEQEWQEPAEADWNASAPPADWNDAANAEAF) form a disordered region. The span at 246-263 (NASAPPADWNDAANAEAF) shows a compositional bias: low complexity.

The protein belongs to the universal ribosomal protein uS2 family. In terms of assembly, component of the small ribosomal subunit. Mature ribosomes consist of a small (40S) and a large (60S) subunit. The 40S subunit contains about 33 different proteins and 1 molecule of RNA (18S). The 60S subunit contains about 49 different proteins and 3 molecules of RNA (25S, 5.8S and 5S). Interacts with RPS21.

It localises to the cytoplasm. Its function is as follows. Required for the assembly and/or stability of the 40S ribosomal subunit. Required for the processing of the 20S rRNA-precursor to mature 18S rRNA in a late step of the maturation of 40S ribosomal subunits. This Komagataella phaffii (strain GS115 / ATCC 20864) (Yeast) protein is Small ribosomal subunit protein uS2.